The sequence spans 205 residues: High frequency lysogenization protein HflD homolog (205 aa).

This sequence belongs to the HflD family.

The protein resides in the cytoplasm. It localises to the cell inner membrane. The sequence is that of High frequency lysogenization protein HflD homolog from Vibrio atlanticus (strain LGP32) (Vibrio splendidus (strain Mel32)).